The sequence spans 393 residues: Glutamyl-tRNA reductase (393 aa).

Substrate contacts are provided by residues threonine 47–arginine 50, serine 98, glutamate 103–aspartate 105, and glutamine 109. The active-site Nucleophile is the cysteine 48. NADP(+) is bound at residue glycine 177–glycine 182.

The protein belongs to the glutamyl-tRNA reductase family. Homodimer.

It catalyses the reaction (S)-4-amino-5-oxopentanoate + tRNA(Glu) + NADP(+) = L-glutamyl-tRNA(Glu) + NADPH + H(+). Its pathway is porphyrin-containing compound metabolism; protoporphyrin-IX biosynthesis; 5-aminolevulinate from L-glutamyl-tRNA(Glu): step 1/2. Functionally, catalyzes the NADPH-dependent reduction of glutamyl-tRNA(Glu) to glutamate 1-semialdehyde (GSA). This Pyrobaculum neutrophilum (strain DSM 2338 / JCM 9278 / NBRC 100436 / V24Sta) (Thermoproteus neutrophilus) protein is Glutamyl-tRNA reductase.